Here is a 1358-residue protein sequence, read N- to C-terminus: Retrotransposon-like protein 1 (1358 aa).

Disordered regions lie at residues 1–159 and 563–616; these read MIEP…TEHS and ADVF…TAPW. The span at 19–30 shows a compositional bias: low complexity; the sequence is SSKQMESSEGSS. Residues 65–79 are compositionally biased toward acidic residues; it reads EMEELPTDLLQDMEE. A compositionally biased stretch (basic and acidic residues) spans 131–149; it reads AREEQEAHTDLKESGREET. Acidic residues predominate over residues 583-592; it reads GSDDLSESEP. Helical transmembrane passes span 1083–1099 and 1126–1146; these read LLYW…LVLL and LILD…TQLL. Disordered stretches follow at residues 1250-1283 and 1338-1358; these read DGLQ…PRHL and QPRE…ANLD. Residues 1267–1276 show a composition bias toward low complexity; that stretch reads APPSHTAATH. Residues 1338–1347 are compositionally biased toward basic and acidic residues; it reads QPREQARLEE. Residues 1348–1358 show a composition bias toward acidic residues; sequence LPDEDEDANLD.

It localises to the membrane. Plays an essential role in capillaries endothelial cells for the maintenance of feto-maternal interface and for development of the placenta. This chain is Retrotransposon-like protein 1 (RTL1), found in Homo sapiens (Human).